Consider the following 448-residue polypeptide: Alpha-2B adrenergic receptor (448 aa).

At 1 to 12 the chain is on the extracellular side; sequence MDHQEPYSVQAT. Residues 13-38 traverse the membrane as a helical segment; that stretch reads AAIAAVITFLILFTIFGNALVILAVL. Topologically, residues 39 to 49 are cytoplasmic; it reads TSRSLPAPQNL. A helical membrane pass occupies residues 50–75; it reads FLVSLAAADILVATLIIPFSLANELL. The Extracellular portion of the chain corresponds to 76–85; the sequence is GYWYFWRTWC. A disulfide bond links Cys-85 and Cys-163. A helical transmembrane segment spans residues 86-108; that stretch reads EVYLALDVLFCTSSIVHLCAISL. The Cytoplasmic segment spans residues 109 to 130; the sequence is DRYWAVSRALEYNSKRTPRRIK. Residues 131–153 traverse the membrane as a helical segment; the sequence is CIILTVWLIAAVISLPPLIYKGD. Topologically, residues 154 to 168 are extracellular; it reads QGPSPRGPQCKINQE. Residues 169-192 traverse the membrane as a helical segment; sequence AWYILASSIGSFFAPCLIMILVYL. Residues 193–370 lie on the Cytoplasmic side of the membrane; it reads RIYLIAKRSH…MTREKRFTFV (178 aa). The tract at residues 203 to 326 is disordered; it reads RRGPRAKGGP…PASMCSPSLQ (124 aa). Residues 293–309 show a composition bias toward acidic residues; the sequence is AEEEAEEEEEEEGDECE. The chain crosses the membrane as a helical span at residues 371 to 394; sequence LAVVIGVFVLCWFPFFFTYSLGAI. The Extracellular segment spans residues 395 to 403; it reads CPQHCKVPH. A helical transmembrane segment spans residues 404 to 427; the sequence is GLFQFFFWIGYCNSSLNPVIYTIF. Residues 428–448 are Cytoplasmic-facing; the sequence is NQDFRRAFRRILCRQWTQTAW. Cys-440 carries the S-palmitoyl cysteine lipid modification.

The protein belongs to the G-protein coupled receptor 1 family. Adrenergic receptor subfamily. ADRA2B sub-subfamily. Interacts with RAB26. Interacts with PPP1R9B.

It localises to the cell membrane. Its function is as follows. Alpha-2 adrenergic receptors mediate the catecholamine-induced inhibition of adenylate cyclase through the action of G proteins. The sequence is that of Alpha-2B adrenergic receptor (ADRA2B) from Cavia porcellus (Guinea pig).